A 438-amino-acid chain; its full sequence is Dol-P-Man:Man(5)GlcNAc(2)-PP-Dol alpha-1,3-mannosyltransferase (438 aa).

Ser-13 is subject to Phosphoserine. 11 consecutive transmembrane segments (helical) span residues 41-61 (YTLL…FWVI), 95-115 (TGPL…FYAT), 123-143 (MAQN…FLIY), 149-169 (VPPF…SIFV), 172-192 (LFND…FLAQ), 203-223 (LAVS…FLLL), 231-251 (ALPK…PFLL), 289-309 (FHLA…LCRW), 332-352 (ALTP…GICF), 356-376 (LHYQ…WAMP), and 407-427 (AALH…PESF).

It belongs to the glycosyltransferase ALG3 family.

The protein localises to the endoplasmic reticulum membrane. It catalyses the reaction an alpha-D-Man-(1-&gt;2)-alpha-D-Man-(1-&gt;2)-alpha-D-Man-(1-&gt;3)-[alpha-D-Man-(1-&gt;6)]-beta-D-Man-(1-&gt;4)-beta-D-GlcNAc-(1-&gt;4)-alpha-D-GlcNAc-diphospho-di-trans,poly-cis-dolichol + a di-trans,poly-cis-dolichyl beta-D-mannosyl phosphate = an alpha-D-Man-(1-&gt;2)-alpha-D-Man-(1-&gt;2)-alpha-D-Man-(1-&gt;3)-[alpha-D-Man-(1-&gt;3)-alpha-D-Man-(1-&gt;6)]-beta-D-Man-(1-&gt;4)-beta-D-GlcNAc-(1-&gt;4)-alpha-D-GlcNAc-diphospho-di-trans,poly-cis-dolichol + a di-trans,poly-cis-dolichyl phosphate + H(+). It participates in protein modification; protein glycosylation. Its function is as follows. Dol-P-Man:Man(5)GlcNAc(2)-PP-Dol alpha-1,3-mannosyltransferase that operates in the biosynthetic pathway of dolichol-linked oligosaccharides, the glycan precursors employed in protein asparagine (N)-glycosylation. The assembly of dolichol-linked oligosaccharides begins on the cytosolic side of the endoplasmic reticulum membrane and finishes in its lumen. The sequential addition of sugars to dolichol pyrophosphate produces dolichol-linked oligosaccharides containing fourteen sugars, including two GlcNAcs, nine mannoses and three glucoses. Once assembled, the oligosaccharide is transferred from the lipid to nascent proteins by oligosaccharyltransferases. In the lumen of the endoplasmic reticulum, adds the first dolichyl beta-D-mannosyl phosphate derived mannose in an alpha-1,3 linkage to Man(5)GlcNAc(2)-PP-dolichol to produce Man(6)GlcNAc(2)-PP-dolichol. Man(6)GlcNAc(2)-PP-dolichol is a substrate for ALG9, the following enzyme in the biosynthetic pathway. The polypeptide is Dol-P-Man:Man(5)GlcNAc(2)-PP-Dol alpha-1,3-mannosyltransferase (Mus musculus (Mouse)).